The sequence spans 321 residues: Ribose-phosphate pyrophosphokinase C (321 aa).

Mg(2+) is bound by residues aspartate 132 and aspartate 147. The tract at residues 214–229 (SGKVAIIIGSIADTCE) is binding of phosphoribosylpyrophosphate.

Belongs to the ribose-phosphate pyrophosphokinase family. Mg(2+) serves as cofactor.

Its subcellular location is the cytoplasm. The enzyme catalyses D-ribose 5-phosphate + ATP = 5-phospho-alpha-D-ribose 1-diphosphate + AMP + H(+). It functions in the pathway metabolic intermediate biosynthesis; 5-phospho-alpha-D-ribose 1-diphosphate biosynthesis; 5-phospho-alpha-D-ribose 1-diphosphate from D-ribose 5-phosphate (route I): step 1/1. This Dictyostelium discoideum (Social amoeba) protein is Ribose-phosphate pyrophosphokinase C (prsC).